A 522-amino-acid chain; its full sequence is Probable poly(ADP-ribose) glycohydrolase 2 (522 aa).

The protein belongs to the poly(ADP-ribose) glycohydrolase family.

It carries out the reaction [(1''-&gt;2')-ADP-alpha-D-ribose](n) + H2O = [(1''-&gt;2')-ADP-alpha-D-ribose](n-1) + ADP-D-ribose. Poly(ADP-ribose) synthesized after DNA damage is only present transiently and is rapidly degraded by poly(ADP-ribose) glycohydrolase. The chain is Probable poly(ADP-ribose) glycohydrolase 2 (PARG2) from Arabidopsis thaliana (Mouse-ear cress).